The following is a 318-amino-acid chain: Glycerol 2-dehydrogenase (NADP(+)) (318 aa).

Tyrosine 52 functions as the Proton donor in the catalytic mechanism. Position 115 (histidine 115) interacts with substrate. 217–277 (SPLGSQNQVP…SSTPSRIESN (61 aa)) contributes to the NADP(+) binding site.

It belongs to the aldo/keto reductase family.

The enzyme catalyses glycerol + NADP(+) = dihydroxyacetone + NADPH + H(+). In terms of biological role, glycerol oxidoreductase probably involved in glycerol synthesis. This Hypocrea jecorina (Trichoderma reesei) protein is Glycerol 2-dehydrogenase (NADP(+)) (gld2).